A 298-amino-acid chain; its full sequence is Probable endonuclease 4 (298 aa).

Zn(2+) contacts are provided by His69, His111, Glu146, Asp180, His183, His215, Asp228, His230, and Glu260.

Belongs to the AP endonuclease 2 family. Requires Zn(2+) as cofactor.

The catalysed reaction is Endonucleolytic cleavage to 5'-phosphooligonucleotide end-products.. Its function is as follows. Endonuclease IV plays a role in DNA repair. It cleaves phosphodiester bonds at apurinic or apyrimidinic (AP) sites, generating a 3'-hydroxyl group and a 5'-terminal sugar phosphate. The protein is Probable endonuclease 4 of Bacillus cereus (strain AH187).